The sequence spans 201 residues: uncharacterized protein (201 aa).

Its function is as follows. May have a role in tissue tropism within the insect larvae. This is an uncharacterized protein from Lepidoptera (butterflies and moths).